We begin with the raw amino-acid sequence, 329 residues long: Adenylate isopentenyltransferase (329 aa).

Residues Gly-37–Ser-44, Lys-63, Thr-74, Ser-129–Ser-131, Lys-220–Ile-222, and Lys-313 each bind ATP.

Belongs to the IPP transferase family. Mg(2+) serves as cofactor. Expressed in roots, stems, leaves and cones.

The catalysed reaction is dimethylallyl diphosphate + AMP = N(6)-(dimethylallyl)adenosine 5'-phosphate + diphosphate. It carries out the reaction dimethylallyl diphosphate + ADP = N(6)-(dimethylallyl)adenosine 5'-diphosphate + diphosphate. The enzyme catalyses dimethylallyl diphosphate + ATP = N(6)-(dimethylallyl)adenosine 5'-triphosphate + diphosphate. Its function is as follows. Involved in cytokinin biosynthesis. Catalyzes the transfer of an isopentenyl group from dimethylallyl diphosphate (DMAPP) to ATP, ADP and AMP. GMP, IMP, CMP or UMP are not used as substrates. The protein is Adenylate isopentenyltransferase of Humulus lupulus (European hop).